A 218-amino-acid chain; its full sequence is DNA-directed RNA polymerases IV and V subunit 5B (218 aa).

The protein belongs to the archaeal Rpo5/eukaryotic RPB5 RNA polymerase subunit family. As to quaternary structure, component of the RNA polymerase IV and V complexes. Interacts with NRPD1. Expressed inleaves, flower buds, flowers and siliques.

The protein localises to the nucleus. DNA-dependent RNA polymerase catalyzes the transcription of DNA into RNA using the four ribonucleoside triphosphates as substrates. Component of RNA polymerases IV and V which mediate short-interfering RNAs (siRNA) accumulation and subsequent RNA-directed DNA methylation-dependent (RdDM) transcriptional gene silencing (TGS) of endogenous repeated sequences, including transposable elements. This Arabidopsis thaliana (Mouse-ear cress) protein is DNA-directed RNA polymerases IV and V subunit 5B (NRPD5B).